A 305-amino-acid chain; its full sequence is tRNA dimethylallyltransferase (305 aa).

9–16 (GPTASGKS) contributes to the ATP binding site. Residue 11–16 (TASGKS) participates in substrate binding. The interaction with substrate tRNA stretch occupies residues 34 to 37 (DSKQ).

This sequence belongs to the IPP transferase family. In terms of assembly, monomer. The cofactor is Mg(2+).

It catalyses the reaction adenosine(37) in tRNA + dimethylallyl diphosphate = N(6)-dimethylallyladenosine(37) in tRNA + diphosphate. Its function is as follows. Catalyzes the transfer of a dimethylallyl group onto the adenine at position 37 in tRNAs that read codons beginning with uridine, leading to the formation of N6-(dimethylallyl)adenosine (i(6)A). This is tRNA dimethylallyltransferase from Anaplasma marginale (strain St. Maries).